The sequence spans 534 residues: Prolyl 4-hydroxylase subunit alpha-2 (534 aa).

The N-terminal stretch at 1–21 (MKPWLCLVFFTSAFLIWHAEA) is a signal peptide. Residue Asn-115 is glycosylated (N-linked (GlcNAc...) asparagine). The TPR repeat unit spans residues 207–240 (VEILDYLSYAVFQFGDLHRAMELTRRLISLDSTH). Asn-263 carries N-linked (GlcNAc...) asparagine glycosylation. The region spanning 413-519 (TAELLQVANY…KWVSNKWFHE (107 aa)) is the Fe2OG dioxygenase domain. Fe cation-binding residues include His-431, Asp-433, and His-500. Lys-510 provides a ligand contact to 2-oxoglutarate.

This sequence belongs to the P4HA family. As to quaternary structure, heterotetramer of two alpha-2 chains and two beta chains (the beta chain is the multi-functional PDI). Requires Fe(2+) as cofactor. It depends on L-ascorbate as a cofactor.

The protein localises to the endoplasmic reticulum lumen. It carries out the reaction L-prolyl-[collagen] + 2-oxoglutarate + O2 = trans-4-hydroxy-L-prolyl-[collagen] + succinate + CO2. Its function is as follows. Catalyzes the post-translational formation of 4-hydroxyproline in -Xaa-Pro-Gly- sequences in collagens and other proteins. The polypeptide is Prolyl 4-hydroxylase subunit alpha-2 (P4HA2) (Gallus gallus (Chicken)).